We begin with the raw amino-acid sequence, 98 residues long: DNA-binding protein Fis (98 aa).

The H-T-H motif DNA-binding region spans 74–93 (QTRAALMMGINRGTLRKKLK).

This sequence belongs to the transcriptional regulatory Fis family. In terms of assembly, homodimer.

Activates ribosomal RNA transcription. Plays a direct role in upstream activation of rRNA promoters. The polypeptide is DNA-binding protein Fis (Photorhabdus laumondii subsp. laumondii (strain DSM 15139 / CIP 105565 / TT01) (Photorhabdus luminescens subsp. laumondii)).